A 248-amino-acid polypeptide reads, in one-letter code: Ubiquinone/menaquinone biosynthesis C-methyltransferase UbiE (248 aa).

Residues Thr-71, Asp-92, and 120-121 contribute to the S-adenosyl-L-methionine site; that span reads DA.

The protein belongs to the class I-like SAM-binding methyltransferase superfamily. MenG/UbiE family.

It carries out the reaction a 2-demethylmenaquinol + S-adenosyl-L-methionine = a menaquinol + S-adenosyl-L-homocysteine + H(+). The enzyme catalyses a 2-methoxy-6-(all-trans-polyprenyl)benzene-1,4-diol + S-adenosyl-L-methionine = a 5-methoxy-2-methyl-3-(all-trans-polyprenyl)benzene-1,4-diol + S-adenosyl-L-homocysteine + H(+). Its pathway is quinol/quinone metabolism; menaquinone biosynthesis; menaquinol from 1,4-dihydroxy-2-naphthoate: step 2/2. The protein operates within cofactor biosynthesis; ubiquinone biosynthesis. In terms of biological role, methyltransferase required for the conversion of demethylmenaquinol (DMKH2) to menaquinol (MKH2) and the conversion of 2-polyprenyl-6-methoxy-1,4-benzoquinol (DDMQH2) to 2-polyprenyl-3-methyl-6-methoxy-1,4-benzoquinol (DMQH2). The sequence is that of Ubiquinone/menaquinone biosynthesis C-methyltransferase UbiE from Methylococcus capsulatus (strain ATCC 33009 / NCIMB 11132 / Bath).